The sequence spans 554 residues: uncharacterized protein (554 aa).

5 helical membrane-spanning segments follow: residues 13–31 (SVAH…GVYL), 36–58 (IFGV…HFGF), 73–92 (LILF…FSSF), 99–121 (LNLL…YYLW), and 161–183 (IALG…IIAI). 2 consecutive RCK C-terminal domains span residues 199–281 (KTQS…FIGK) and 282–366 (EVEL…VLGN). The next 4 membrane-spanning stretches (helical) occupy residues 376–395 (IVTI…LPIA), 405–422 (LGLA…GRFG), 442–464 (IGIV…QTVV), and 468–490 (GLLY…GAIA).

This sequence belongs to the AAE transporter (TC 2.A.81) family.

The protein resides in the cell membrane. This is an uncharacterized protein from Bacteroides thetaiotaomicron (strain ATCC 29148 / DSM 2079 / JCM 5827 / CCUG 10774 / NCTC 10582 / VPI-5482 / E50).